Reading from the N-terminus, the 644-residue chain is Macrolide export ATP-binding/permease protein MacB (644 aa).

Positions 4-242 constitute an ABC transporter domain; sequence IECKNINRYF…SNVGRIQEKA (239 aa). 40–47 serves as a coordination point for ATP; it reads GQSGSGKS. Helical transmembrane passes span 270–290, 524–544, 574–594, and 607–627; these read LLTMLGIIIGIASVVSVVALG, IALISLVVGGIGVMNIMLVSV, LICIIGGLVGVGLSAAVSLVF, and AASVIGAVACSTGIGIAFGFM.

This sequence belongs to the ABC transporter superfamily. Macrolide exporter (TC 3.A.1.122) family. Homodimer.

Its subcellular location is the cell inner membrane. Functionally, non-canonical ABC transporter that contains transmembrane domains (TMD), which form a pore in the inner membrane, and an ATP-binding domain (NBD), which is responsible for energy generation. Overexpression confers resistance against macrolides. In Neisseria gonorrhoeae, this protein is Macrolide export ATP-binding/permease protein MacB.